Here is a 423-residue protein sequence, read N- to C-terminus: 4-hydroxy-3-methylbut-2-en-1-yl diphosphate synthase (flavodoxin) (423 aa).

Residues C307, C310, C353, and E360 each contribute to the [4Fe-4S] cluster site.

It belongs to the IspG family. [4Fe-4S] cluster serves as cofactor.

It carries out the reaction (2E)-4-hydroxy-3-methylbut-2-enyl diphosphate + oxidized [flavodoxin] + H2O + 2 H(+) = 2-C-methyl-D-erythritol 2,4-cyclic diphosphate + reduced [flavodoxin]. It functions in the pathway isoprenoid biosynthesis; isopentenyl diphosphate biosynthesis via DXP pathway; isopentenyl diphosphate from 1-deoxy-D-xylulose 5-phosphate: step 5/6. In terms of biological role, converts 2C-methyl-D-erythritol 2,4-cyclodiphosphate (ME-2,4cPP) into 1-hydroxy-2-methyl-2-(E)-butenyl 4-diphosphate. The chain is 4-hydroxy-3-methylbut-2-en-1-yl diphosphate synthase (flavodoxin) from Brucella anthropi (strain ATCC 49188 / DSM 6882 / CCUG 24695 / JCM 21032 / LMG 3331 / NBRC 15819 / NCTC 12168 / Alc 37) (Ochrobactrum anthropi).